Consider the following 384-residue polypeptide: Dual-specificity RNA methyltransferase RlmN (384 aa).

The active-site Proton acceptor is the E105. In terms of domain architecture, Radical SAM core spans 111-350 (EDDRATLCVS…TIVRKTRGDD (240 aa)). C118 and C355 are oxidised to a cystine. [4Fe-4S] cluster-binding residues include C125, C129, and C132. S-adenosyl-L-methionine-binding positions include 179–180 (GE), S211, 233–235 (SLH), and N312. C355 (S-methylcysteine intermediate) is an active-site residue.

Belongs to the radical SAM superfamily. RlmN family. The cofactor is [4Fe-4S] cluster.

The protein resides in the cytoplasm. The enzyme catalyses adenosine(2503) in 23S rRNA + 2 reduced [2Fe-2S]-[ferredoxin] + 2 S-adenosyl-L-methionine = 2-methyladenosine(2503) in 23S rRNA + 5'-deoxyadenosine + L-methionine + 2 oxidized [2Fe-2S]-[ferredoxin] + S-adenosyl-L-homocysteine. It catalyses the reaction adenosine(37) in tRNA + 2 reduced [2Fe-2S]-[ferredoxin] + 2 S-adenosyl-L-methionine = 2-methyladenosine(37) in tRNA + 5'-deoxyadenosine + L-methionine + 2 oxidized [2Fe-2S]-[ferredoxin] + S-adenosyl-L-homocysteine. Its function is as follows. Specifically methylates position 2 of adenine 2503 in 23S rRNA and position 2 of adenine 37 in tRNAs. m2A2503 modification seems to play a crucial role in the proofreading step occurring at the peptidyl transferase center and thus would serve to optimize ribosomal fidelity. This Escherichia fergusonii (strain ATCC 35469 / DSM 13698 / CCUG 18766 / IAM 14443 / JCM 21226 / LMG 7866 / NBRC 102419 / NCTC 12128 / CDC 0568-73) protein is Dual-specificity RNA methyltransferase RlmN.